Consider the following 336-residue polypeptide: Ornithine carbamoyltransferase, catabolic (336 aa).

Carbamoyl phosphate-binding positions include 57–60 (STRT), glutamine 84, arginine 108, and 136–139 (HPTQ). L-ornithine is bound by residues asparagine 169, aspartate 233, and 237–238 (SM). Carbamoyl phosphate is bound by residues 275-276 (CL) and arginine 322.

Belongs to the aspartate/ornithine carbamoyltransferase superfamily. OTCase family.

The protein localises to the cytoplasm. The catalysed reaction is carbamoyl phosphate + L-ornithine = L-citrulline + phosphate + H(+). Its pathway is amino-acid degradation; L-arginine degradation via ADI pathway; carbamoyl phosphate from L-arginine: step 2/2. In terms of biological role, reversibly catalyzes the transfer of the carbamoyl group from carbamoyl phosphate (CP) to the N(epsilon) atom of ornithine (ORN) to produce L-citrulline. In Chromobacterium violaceum (strain ATCC 12472 / DSM 30191 / JCM 1249 / CCUG 213 / NBRC 12614 / NCIMB 9131 / NCTC 9757 / MK), this protein is Ornithine carbamoyltransferase, catabolic.